Consider the following 506-residue polypeptide: Apolipoprotein N-acyltransferase (506 aa).

Helical transmembrane passes span 24-44 (LALAPFDFWPLVLVSVAMFYL), 58-78 (GWCYGFGLYGAGTSWIYVSIH), 85-105 (ALLAGLLMLLFIAAIALFFAL), 125-145 (LAFAALWLWQEAFRGWFLTGF), 162-182 (LAPVGGVWLISFALGLTAALL), and 192-212 (KSFLAMGVLLLLAPWVAGLAL). A CN hydrolase domain is found at 230-470 (MQGNIEQSMK…RGVLYGEVVP (241 aa)). Catalysis depends on Glu269, which acts as the Proton acceptor. Lys330 is an active-site residue. The active-site Nucleophile is the Cys382. A helical transmembrane segment spans residues 482–502 (SWPLAIVCLLLFGWALLAARI).

It belongs to the CN hydrolase family. Apolipoprotein N-acyltransferase subfamily.

It is found in the cell inner membrane. It catalyses the reaction N-terminal S-1,2-diacyl-sn-glyceryl-L-cysteinyl-[lipoprotein] + a glycerophospholipid = N-acyl-S-1,2-diacyl-sn-glyceryl-L-cysteinyl-[lipoprotein] + a 2-acyl-sn-glycero-3-phospholipid + H(+). It functions in the pathway protein modification; lipoprotein biosynthesis (N-acyl transfer). In terms of biological role, catalyzes the phospholipid dependent N-acylation of the N-terminal cysteine of apolipoprotein, the last step in lipoprotein maturation. The sequence is that of Apolipoprotein N-acyltransferase from Pseudomonas syringae pv. tomato (strain ATCC BAA-871 / DC3000).